Reading from the N-terminus, the 353-residue chain is (3aS,4S,5R,7aS)-5-hydroxy-7a-methyl-1-oxo-octahydro-1H-indene-4-carboxyl-CoA dehydrogenase (353 aa).

Residues 22-24 (GMG), 171-173 (AGG), and 194-195 (GT) contribute to the FMN site.

This sequence belongs to the nitronate monooxygenase family.

It catalyses the reaction (3aS,4S,5R,7aS)-5-hydroxy-7a-methyl-1-oxo-octahydro-1H-indene-4-carboxyl-CoA + NAD(+) = (5R,7aS)-5-hydroxy-7a-methyl-1-oxo-2,3,5,6,7,7a-hexahydro-1H-indene-carboxyl-CoA + NADH + H(+). Its pathway is steroid metabolism; cholesterol degradation. Functionally, involved in the final steps of cholesterol and steroid degradation. Probably catalyzes the introduction of a double bound into the C ring of 5OH-HIC-CoA, leading to the formation of (5R,7aS)-5-hydroxy-7a-methyl-1-oxo-3,5,6,7-tetrahydro-2H-indene-4-carboxyl-CoA. This is (3aS,4S,5R,7aS)-5-hydroxy-7a-methyl-1-oxo-octahydro-1H-indene-4-carboxyl-CoA dehydrogenase from Rhodococcus jostii (strain RHA1).